A 128-amino-acid chain; its full sequence is MPTINQLIRKGREPKERKSKSPALMGNPQKRGVCIRVTTMTPKKPNSALRKVARVRLTNGVEVWAYIPGIGHNLQEHSVVLVRGGRVKDLPGVRYHIIRGALDAAGVEGRKQGRSKYGTKRPKEGGKK.

The segment at 1–30 (MPTINQLIRKGREPKERKSKSPALMGNPQK) is disordered. At Asp89 the chain carries 3-methylthioaspartic acid. The segment at 106-128 (GVEGRKQGRSKYGTKRPKEGGKK) is disordered.

The protein belongs to the universal ribosomal protein uS12 family. Part of the 30S ribosomal subunit. Contacts proteins S8 and S17. May interact with IF1 in the 30S initiation complex.

In terms of biological role, with S4 and S5 plays an important role in translational accuracy. Functionally, interacts with and stabilizes bases of the 16S rRNA that are involved in tRNA selection in the A site and with the mRNA backbone. Located at the interface of the 30S and 50S subunits, it traverses the body of the 30S subunit contacting proteins on the other side and probably holding the rRNA structure together. The combined cluster of proteins S8, S12 and S17 appears to hold together the shoulder and platform of the 30S subunit. The protein is Small ribosomal subunit protein uS12 of Dictyoglomus thermophilum (strain ATCC 35947 / DSM 3960 / H-6-12).